A 971-amino-acid polypeptide reads, in one-letter code: MDLDPHAGVQVGMRVVRGMDWKWGQQDGGEGGVGTVVELGRHGSPSTPDRTVVVQWDQGTRTNYRAGYQGAHDLLLYDNAQIGIRHPNIICDCCKKHGLRGMRWKCRVCFDYDLCTQCYMHNKHDLTHAFERYETSHSRPVTLSPRQGLPRIPLRGIFQGAKVVRGPDWEWGSQDGGEGKTGRVVDIRGWDVETGRSVASVTWADGTTNVYRVGHKGKVDLKCVGEAAGGFYYKEHLPKLGKPAELQRRVSADGQPFQRGDKVKCLLDTDVLRDMQEGHGGWNPRMAEFIGQMGTVHRITDRGDVRVQFNHETRWTFHPGALTKHNSFWVGDVVRVIDDLDTVKRLQAGHGEWTDDMAPALGRVGKVVKVFGDGNLRVAVGGQRWTFSPACLVACRPEEDANLGVAERARENKSAASVPVAGSLSVALDKLRTQKSDPEHPGRLVVEAALGNVARALDLLRRHPEQAGFHPAVDTKNQGRTALQVAAYLGQVELVRLLLQARASVDLLDEEGNTALHYTAMGNQPEATRLLLSAGCGVDAQNGTRSTALHVAVQRGFLEVVKILCEHGCDVNLPDAHADTPLHSAISAGAGASSIVEVLTEVPGIDVTATNSQGFTLLHHASLKGHVLAVRKILARARQLVDAKKEDGFTALHLAALNNHREVAQVLIREGRCDVNVRNRKLQSPLHLAVQQAHLGLVPLLVDAGCNVNTEDEEGDTALHVALQRHQLLPLVADRAGGDPGPLQLLSRLQASGLPGSTELTVGAAVACFLALEGADVSYANHRGRSPLDLATEGRVLKALQGCAQRFRERQAGGGGGVPPGPRHVLSTPNTVTNLHVSGTAGPEAAECLVCSELALLVLFSPCQHRTVCEECARRMKKCIRCQVIISKKLRPDGSEVVNAIQVPGPPRQLVEELQSRYRQMEERITCPICIDSHIRLVFQCGHGACAPCGAALNACPICRQPIRDRIQIFV.

The MIB/HERC2 1 domain occupies 1-80 (MDLDPHAGVQ…AHDLLLYDNA (80 aa)). The segment at 86 to 138 (HPNIICDCCKKHGLRGMRWKCRVCFDYDLCTQCYMHNKHDLTHAFERYETSHS) adopts a ZZ-type zinc-finger fold. Zn(2+)-binding residues include Cys91, Cys94, Cys106, Cys109, Cys115, Cys118, His124, and His128. Residues 149-227 (LPRIPLRGIF…KVDLKCVGEA (79 aa)) form the MIB/HERC2 2 domain. Phosphoserine is present on Ser251. ANK repeat units lie at residues 478-507 (QGRT…SVDL), 511-540 (EGNT…GVDA), 544-573 (TRST…DVNL), 577-609 (HADT…DVTA), 613-642 (QGFT…QLVD), 647-677 (DGFT…DVNV), 681-710 (KLQS…NVNT), 714-742 (EGDT…DPGP), and 783-812 (RGRS…ERQA). RING-type zinc fingers lie at residues 848 to 883 (CLVC…IRCQ) and 927 to 960 (CPIC…PICR).

In terms of assembly, interacts with actin monomer. Post-translationally, ubiquitinated. Possibly via autoubiquitination.

Its subcellular location is the cytoplasm. The protein localises to the endosome. The catalysed reaction is S-ubiquitinyl-[E2 ubiquitin-conjugating enzyme]-L-cysteine + [acceptor protein]-L-lysine = [E2 ubiquitin-conjugating enzyme]-L-cysteine + N(6)-ubiquitinyl-[acceptor protein]-L-lysine.. The protein operates within protein modification; protein ubiquitination. E3 ubiquitin-protein ligase that mediates ubiquitination of Delta receptors, which act as ligands of Notch proteins. Positively regulates the Delta-mediated Notch signaling by ubiquitinating the intracellular domain of Delta, leading to endocytosis of Delta receptors. This Rattus norvegicus (Rat) protein is E3 ubiquitin-protein ligase MIB2 (Mib2).